The chain runs to 198 residues: Small ribosomal subunit protein uS2 (198 aa).

It belongs to the universal ribosomal protein uS2 family.

This chain is Small ribosomal subunit protein uS2, found in Methanobrevibacter smithii (strain ATCC 35061 / DSM 861 / OCM 144 / PS).